Here is a 400-residue protein sequence, read N- to C-terminus: Lipid-A-disaccharide synthase (400 aa).

Belongs to the LpxB family.

It carries out the reaction a lipid X + a UDP-2-N,3-O-bis[(3R)-3-hydroxyacyl]-alpha-D-glucosamine = a lipid A disaccharide + UDP + H(+). It participates in bacterial outer membrane biogenesis; LPS lipid A biosynthesis. In terms of biological role, condensation of UDP-2,3-diacylglucosamine and 2,3-diacylglucosamine-1-phosphate to form lipid A disaccharide, a precursor of lipid A, a phosphorylated glycolipid that anchors the lipopolysaccharide to the outer membrane of the cell. The polypeptide is Lipid-A-disaccharide synthase (Acidobacterium capsulatum (strain ATCC 51196 / DSM 11244 / BCRC 80197 / JCM 7670 / NBRC 15755 / NCIMB 13165 / 161)).